We begin with the raw amino-acid sequence, 321 residues long: ATP-dependent 6-phosphofructokinase (321 aa).

Gly-12 contributes to the ATP binding site. 22–26 (RGVVR) is a binding site for ADP. ATP is bound by residues 73–74 (RF) and 103–106 (GDGS). Asp-104 contacts Mg(2+). 127–129 (TID) is a substrate binding site. Asp-129 serves as the catalytic Proton acceptor. An ADP-binding site is contributed by Arg-156. Residues Arg-164 and 171–173 (MGR) contribute to the substrate site. ADP is bound by residues 187 to 189 (GCE), Lys-213, and 215 to 217 (KRH). Substrate-binding positions include Glu-224, Arg-245, and 251–254 (HTQR).

Belongs to the phosphofructokinase type A (PFKA) family. ATP-dependent PFK group I subfamily. Prokaryotic clade 'B1' sub-subfamily. In terms of assembly, homotetramer. Mg(2+) is required as a cofactor.

It is found in the cytoplasm. The enzyme catalyses beta-D-fructose 6-phosphate + ATP = beta-D-fructose 1,6-bisphosphate + ADP + H(+). Its pathway is carbohydrate degradation; glycolysis; D-glyceraldehyde 3-phosphate and glycerone phosphate from D-glucose: step 3/4. With respect to regulation, allosterically activated by ADP and other diphosphonucleosides, and allosterically inhibited by phosphoenolpyruvate. Catalyzes the phosphorylation of D-fructose 6-phosphate to fructose 1,6-bisphosphate by ATP, the first committing step of glycolysis. In Glaesserella parasuis serovar 5 (strain SH0165) (Haemophilus parasuis), this protein is ATP-dependent 6-phosphofructokinase.